Reading from the N-terminus, the 319-residue chain is 4-hydroxy-3-methylbut-2-enyl diphosphate reductase (319 aa).

[4Fe-4S] cluster is bound at residue Cys15. 2 residues coordinate (2E)-4-hydroxy-3-methylbut-2-enyl diphosphate: His44 and His77. Residues His44 and His77 each contribute to the dimethylallyl diphosphate site. Isopentenyl diphosphate is bound by residues His44 and His77. Residue Cys99 coordinates [4Fe-4S] cluster. His127 provides a ligand contact to (2E)-4-hydroxy-3-methylbut-2-enyl diphosphate. His127 contacts dimethylallyl diphosphate. Isopentenyl diphosphate is bound at residue His127. The Proton donor role is filled by Glu129. A (2E)-4-hydroxy-3-methylbut-2-enyl diphosphate-binding site is contributed by Thr172. Position 202 (Cys202) interacts with [4Fe-4S] cluster. (2E)-4-hydroxy-3-methylbut-2-enyl diphosphate-binding residues include Ser230, Ser231, Asn232, and Ser274. Dimethylallyl diphosphate contacts are provided by Ser230, Ser231, Asn232, and Ser274. Ser230, Ser231, Asn232, and Ser274 together coordinate isopentenyl diphosphate.

Belongs to the IspH family. The cofactor is [4Fe-4S] cluster.

It carries out the reaction isopentenyl diphosphate + 2 oxidized [2Fe-2S]-[ferredoxin] + H2O = (2E)-4-hydroxy-3-methylbut-2-enyl diphosphate + 2 reduced [2Fe-2S]-[ferredoxin] + 2 H(+). The enzyme catalyses dimethylallyl diphosphate + 2 oxidized [2Fe-2S]-[ferredoxin] + H2O = (2E)-4-hydroxy-3-methylbut-2-enyl diphosphate + 2 reduced [2Fe-2S]-[ferredoxin] + 2 H(+). Its pathway is isoprenoid biosynthesis; dimethylallyl diphosphate biosynthesis; dimethylallyl diphosphate from (2E)-4-hydroxy-3-methylbutenyl diphosphate: step 1/1. It functions in the pathway isoprenoid biosynthesis; isopentenyl diphosphate biosynthesis via DXP pathway; isopentenyl diphosphate from 1-deoxy-D-xylulose 5-phosphate: step 6/6. In terms of biological role, catalyzes the conversion of 1-hydroxy-2-methyl-2-(E)-butenyl 4-diphosphate (HMBPP) into a mixture of isopentenyl diphosphate (IPP) and dimethylallyl diphosphate (DMAPP). Acts in the terminal step of the DOXP/MEP pathway for isoprenoid precursor biosynthesis. The protein is 4-hydroxy-3-methylbut-2-enyl diphosphate reductase of Xanthomonas euvesicatoria pv. vesicatoria (strain 85-10) (Xanthomonas campestris pv. vesicatoria).